Reading from the N-terminus, the 33-residue chain is Photosystem II reaction center protein Psb30 (33 aa).

A helical membrane pass occupies residues 5 to 25 (VIAQLTMLTIAVITGPLVIFF).

The protein belongs to the Psb30/Ycf12 family. As to quaternary structure, PSII is composed of 1 copy each of membrane proteins PsbA, PsbB, PsbC, PsbD, PsbE, PsbF, PsbH, PsbI, PsbJ, PsbK, PsbL, PsbM, PsbT, PsbX, PsbY, PsbZ, Psb30/Ycf12, peripheral proteins of the oxygen-evolving complex and a large number of cofactors. It forms dimeric complexes.

It localises to the plastid. It is found in the chloroplast thylakoid membrane. Its function is as follows. A core subunit of photosystem II (PSII), probably helps stabilize the reaction center. The protein is Photosystem II reaction center protein Psb30 of Welwitschia mirabilis (Tree tumbo).